The sequence spans 376 residues: Probable sister chromatid cohesion protein DCC1 (376 aa).

Positions glutamine 213–aspartate 232 are disordered. Residues serine 219–aspartate 232 are compositionally biased toward gly residues.

Belongs to the DCC1 family.

It is found in the nucleus. Functionally, loads PCNA onto primed templates regulating velocity, spacing and restart activity of replication forks. May couple DNA replication to sister chromatid cohesion. The chain is Probable sister chromatid cohesion protein DCC1 from Dictyostelium discoideum (Social amoeba).